A 348-amino-acid chain; its full sequence is Phosphoribosylformylglycinamidine cyclo-ligase (348 aa).

The protein belongs to the AIR synthase family.

The protein localises to the cytoplasm. The enzyme catalyses 2-formamido-N(1)-(5-O-phospho-beta-D-ribosyl)acetamidine + ATP = 5-amino-1-(5-phospho-beta-D-ribosyl)imidazole + ADP + phosphate + H(+). The protein operates within purine metabolism; IMP biosynthesis via de novo pathway; 5-amino-1-(5-phospho-D-ribosyl)imidazole from N(2)-formyl-N(1)-(5-phospho-D-ribosyl)glycinamide: step 2/2. This is Phosphoribosylformylglycinamidine cyclo-ligase from Sorangium cellulosum (strain So ce56) (Polyangium cellulosum (strain So ce56)).